A 99-amino-acid chain; its full sequence is Integration host factor subunit alpha (99 aa).

Belongs to the bacterial histone-like protein family. Heterodimer of an alpha and a beta chain.

This protein is one of the two subunits of integration host factor, a specific DNA-binding protein that functions in genetic recombination as well as in transcriptional and translational control. This Xylella fastidiosa (strain M12) protein is Integration host factor subunit alpha.